The following is a 101-amino-acid chain: Small ribosomal subunit protein uS14 (101 aa).

This sequence belongs to the universal ribosomal protein uS14 family. In terms of assembly, part of the 30S ribosomal subunit. Contacts proteins S3 and S10.

Functionally, binds 16S rRNA, required for the assembly of 30S particles and may also be responsible for determining the conformation of the 16S rRNA at the A site. The sequence is that of Small ribosomal subunit protein uS14 from Acinetobacter baumannii (strain SDF).